The sequence spans 354 residues: Hyaluronan and proteoglycan link protein 1 (354 aa).

Residues 1-15 (MKSLLLLVLISICWA) constitute a propeptide that is removed on maturation. Residues asparagine 21 and asparagine 56 are each glycosylated (N-linked (GlcNAc...) asparagine). The 115-residue stretch at 38–152 (PHLLVEAEQA…EGLEDDTVVV (115 aa)) folds into the Ig-like V-type domain. 5 disulfides stabilise this stretch: cysteine 61–cysteine 139, cysteine 181–cysteine 252, cysteine 205–cysteine 226, cysteine 279–cysteine 349, and cysteine 304–cysteine 325. Link domains are found at residues 159–254 (VVFP…FCFT) and 259–351 (GRFY…YCFR).

It belongs to the HAPLN family. Widely expressed. Weakly expressed in the brain.

The protein resides in the secreted. It is found in the extracellular space. The protein localises to the extracellular matrix. In terms of biological role, stabilizes the aggregates of proteoglycan monomers with hyaluronic acid in the extracellular cartilage matrix. The polypeptide is Hyaluronan and proteoglycan link protein 1 (HAPLN1) (Homo sapiens (Human)).